The chain runs to 184 residues: Large ribosomal subunit protein uL18 (184 aa).

The protein belongs to the universal ribosomal protein uL18 family. As to quaternary structure, part of the 50S ribosomal subunit. Contacts the 5S and 23S rRNAs.

Its function is as follows. This is one of the proteins that bind and probably mediate the attachment of the 5S RNA into the large ribosomal subunit, where it forms part of the central protuberance. This Natronomonas pharaonis (strain ATCC 35678 / DSM 2160 / CIP 103997 / JCM 8858 / NBRC 14720 / NCIMB 2260 / Gabara) (Halobacterium pharaonis) protein is Large ribosomal subunit protein uL18.